Here is a 434-residue protein sequence, read N- to C-terminus: Nicotinate phosphoribosyltransferase (434 aa).

Histidine 242 is modified (phosphohistidine; by autocatalysis).

It belongs to the NAPRTase family. Post-translationally, transiently phosphorylated on a His residue during the reaction cycle. Phosphorylation strongly increases the affinity for substrates and increases the rate of nicotinate D-ribonucleotide production. Dephosphorylation regenerates the low-affinity form of the enzyme, leading to product release.

The enzyme catalyses nicotinate + 5-phospho-alpha-D-ribose 1-diphosphate + ATP + H2O = nicotinate beta-D-ribonucleotide + ADP + phosphate + diphosphate. It functions in the pathway cofactor biosynthesis; NAD(+) biosynthesis; nicotinate D-ribonucleotide from nicotinate: step 1/1. Functionally, catalyzes the synthesis of beta-nicotinate D-ribonucleotide from nicotinate and 5-phospho-D-ribose 1-phosphate at the expense of ATP. The polypeptide is Nicotinate phosphoribosyltransferase (Rhizobium etli (strain CIAT 652)).